The following is a 152-amino-acid chain: Lipoprotein signal peptidase (152 aa).

Transmembrane regions (helical) follow at residues 55–75 (NKMWFFYIITVVFVVFIVFYM) and 85–105 (LGISLGLILGGAIGNFIDRVF). Catalysis depends on residues D111 and D129. Residues 124–144 (VFNIADSALCIGVVLIIIQTL) form a helical membrane-spanning segment.

It belongs to the peptidase A8 family.

The protein resides in the cell membrane. The enzyme catalyses Release of signal peptides from bacterial membrane prolipoproteins. Hydrolyzes -Xaa-Yaa-Zaa-|-(S,diacylglyceryl)Cys-, in which Xaa is hydrophobic (preferably Leu), and Yaa (Ala or Ser) and Zaa (Gly or Ala) have small, neutral side chains.. It participates in protein modification; lipoprotein biosynthesis (signal peptide cleavage). Functionally, this protein specifically catalyzes the removal of signal peptides from prolipoproteins. The polypeptide is Lipoprotein signal peptidase (Bacillus cereus (strain ZK / E33L)).